Reading from the N-terminus, the 99-residue chain is UPF0235 protein PM1313 (99 aa).

Belongs to the UPF0235 family.

The sequence is that of UPF0235 protein PM1313 from Pasteurella multocida (strain Pm70).